Consider the following 181-residue polypeptide: uncharacterized protein (181 aa).

The first 19 residues, 1 to 19, serve as a signal peptide directing secretion; sequence MRRLLACSAGVLCFSQLGA.

This is an uncharacterized protein from Treponema pallidum (strain Nichols).